The following is a 235-amino-acid chain: Uridylate kinase (235 aa).

9-12 (KISG) is an ATP binding site. Glycine 50 is a binding site for UMP. Glycine 51 and arginine 55 together coordinate ATP. UMP-binding positions include aspartate 70 and 131-138 (TGFPYFTT). Positions 159, 165, and 168 each coordinate ATP.

This sequence belongs to the UMP kinase family. Homohexamer; trimer of dimers.

It localises to the cytoplasm. The catalysed reaction is UMP + ATP = UDP + ADP. It functions in the pathway pyrimidine metabolism; CTP biosynthesis via de novo pathway; UDP from UMP (UMPK route): step 1/1. Its activity is regulated as follows. Unlike other bacteria, is not activated by GTP. UTP is a competitive inhibitor against UMP and a non-competitive inhibitor toward ATP. Functionally, catalyzes the reversible phosphorylation of UMP to UDP, with ATP as the most efficient phosphate donor. Is also able to phosphorylate dUMP. The protein is Uridylate kinase (pyrH) of Ureaplasma parvum serovar 3 (strain ATCC 700970).